Reading from the N-terminus, the 61-residue chain is Large ribosomal subunit protein uL30 (61 aa).

The protein belongs to the universal ribosomal protein uL30 family. Part of the 50S ribosomal subunit.

The protein is Large ribosomal subunit protein uL30 of Exiguobacterium sibiricum (strain DSM 17290 / CCUG 55495 / CIP 109462 / JCM 13490 / 255-15).